Here is a 479-residue protein sequence, read N- to C-terminus: Aspartyl/glutamyl-tRNA(Asn/Gln) amidotransferase subunit B (479 aa).

This sequence belongs to the GatB/GatE family. GatB subfamily. As to quaternary structure, heterotrimer of A, B and C subunits.

The enzyme catalyses L-glutamyl-tRNA(Gln) + L-glutamine + ATP + H2O = L-glutaminyl-tRNA(Gln) + L-glutamate + ADP + phosphate + H(+). It carries out the reaction L-aspartyl-tRNA(Asn) + L-glutamine + ATP + H2O = L-asparaginyl-tRNA(Asn) + L-glutamate + ADP + phosphate + 2 H(+). Its function is as follows. Allows the formation of correctly charged Asn-tRNA(Asn) or Gln-tRNA(Gln) through the transamidation of misacylated Asp-tRNA(Asn) or Glu-tRNA(Gln) in organisms which lack either or both of asparaginyl-tRNA or glutaminyl-tRNA synthetases. The reaction takes place in the presence of glutamine and ATP through an activated phospho-Asp-tRNA(Asn) or phospho-Glu-tRNA(Gln). This is Aspartyl/glutamyl-tRNA(Asn/Gln) amidotransferase subunit B from Myxococcus xanthus (strain DK1622).